An 840-amino-acid chain; its full sequence is Urease (840 aa).

One can recognise a Urease domain in the interval 402 to 840 (GAIDCHVHYI…VPLSRNYFLF (439 aa)). Ni(2+)-binding residues include His-407, His-409, and Lys-490. Residue Lys-490 is modified to N6-carboxylysine. A substrate-binding site is contributed by His-492. Ni(2+)-binding residues include His-519 and His-545. Residue His-593 is the Proton donor of the active site. A Ni(2+)-binding site is contributed by Asp-633.

The protein in the C-terminal section; belongs to the metallo-dependent hydrolases superfamily. Urease alpha subunit family. As to quaternary structure, homohexamer. Other oligomeric forms may exist depending on pH and presence of salts. It depends on Ni cation as a cofactor. Carboxylation allows a single lysine to coordinate two nickel ions.

The catalysed reaction is urea + 2 H2O + H(+) = hydrogencarbonate + 2 NH4(+). The protein operates within nitrogen metabolism; urea degradation; CO(2) and NH(3) from urea (urease route): step 1/1. With respect to regulation, P-hydroxymercuribenzoate irreversibly abolishes ureolytic activity, but does not inhibit the ability to activate platelets. Also inhibited by acetohydroxamic acid (AHA), a chelator of Ni2+ and Zn2+ ions. In terms of biological role, urea hydrolase involved in nitrogen recycling from ureide, purine, and arginine catabolism. Is known to be highly toxic and lethal when given by intravenous route, producing convulsions and other signs of central nervous system intoxication associated with the high levels of ammonia formed in the blood of mice and rabbits. Is neurotoxic in mammals, when directly injected into hippocampus. It may induce seizures by acting at a neuronal network level, thereby disturbing electroencephalographic rhythms and causing metabolic alterations in key areas related to epileptogenesis and to neurogenic pulmonary edema. It increases calcium influx and neuronal firing rate in the hippocampus. Is able to insert itself into lipid bilayers, altering physicochemical properties of artificial membranes, and forming cation-selective ion channels. In vitro, has the ability to induce platelet aggregation, platelet granules secretion and release of ATP. In contrast to canatoxin, another urease from C.ensiformis, is not lethal to mice when intraperitoneally injected. This is Urease from Canavalia ensiformis (Jack bean).